Reading from the N-terminus, the 185-residue chain is Large ribosomal subunit protein uL5 (185 aa).

The protein belongs to the universal ribosomal protein uL5 family. In terms of assembly, part of the 50S ribosomal subunit; part of the 5S rRNA/L5/L18/L25 subcomplex. Contacts the 5S rRNA and the P site tRNA. Forms a bridge to the 30S subunit in the 70S ribosome.

Its function is as follows. This is one of the proteins that bind and probably mediate the attachment of the 5S RNA into the large ribosomal subunit, where it forms part of the central protuberance. In the 70S ribosome it contacts protein S13 of the 30S subunit (bridge B1b), connecting the 2 subunits; this bridge is implicated in subunit movement. Contacts the P site tRNA; the 5S rRNA and some of its associated proteins might help stabilize positioning of ribosome-bound tRNAs. The protein is Large ribosomal subunit protein uL5 of Rhizobium leguminosarum bv. trifolii (strain WSM2304).